The primary structure comprises 150 residues: Large ribosomal subunit protein bL9 (150 aa).

The protein belongs to the bacterial ribosomal protein bL9 family.

Functionally, binds to the 23S rRNA. The polypeptide is Large ribosomal subunit protein bL9 (Wigglesworthia glossinidia brevipalpis).